The following is a 218-amino-acid chain: Attacin-B (218 aa).

The N-terminal stretch at 1-17 is a signal peptide; that stretch reads MQKTSILILALFAIAEA. The propeptide occupies 18–28; that stretch reads VPTTGPIRVRR.

Belongs to the attacin/sarcotoxin-2 family. In terms of tissue distribution, hemolymph (at protein level).

It is found in the secreted. Functionally, hemolymph antibacterial protein. The chain is Attacin-B (AttB) from Drosophila melanogaster (Fruit fly).